Here is a 416-residue protein sequence, read N- to C-terminus: Phosphoglycerate kinase (416 aa).

Positions 23, 24, 25, 26, 38, 39, 62, 63, 65, 66, 121, 122, 168, and 169 each coordinate (2R)-3-phosphoglycerate. Glycine 212 is a binding site for ADP. Residue glycine 212 participates in CDP binding. AMP is bound by residues alanine 213 and lysine 214. Alanine 213 lines the ATP pocket. Alanine 213 serves as a coordination point for Mg(2+). The Mg(2+) site is built by alanine 216 and aspartate 217. CDP is bound at residue aspartate 217. Lysine 218 contacts AMP. Residue lysine 218 participates in ATP binding. ADP is bound at residue glycine 236. Glycine 236 serves as a coordination point for CDP. Positions 237 and 311 each coordinate AMP. ATP-binding residues include glycine 237 and glycine 311. 2 residues coordinate CDP: glycine 336 and phenylalanine 341. Phenylalanine 341 is a binding site for ADP. Residue glutamate 342 participates in AMP binding. Residues glutamate 342, aspartate 373, and threonine 374 each coordinate ATP. Aspartate 373 provides a ligand contact to Mg(2+).

Belongs to the phosphoglycerate kinase family. In terms of assembly, monomer. Mg(2+) serves as cofactor.

The protein localises to the cytoplasm. The protein resides in the mitochondrion. It catalyses the reaction (2R)-3-phosphoglycerate + ATP = (2R)-3-phospho-glyceroyl phosphate + ADP. It participates in carbohydrate degradation; glycolysis; pyruvate from D-glyceraldehyde 3-phosphate: step 2/5. In terms of biological role, catalyzes one of the two ATP producing reactions in the glycolytic pathway via the reversible conversion of 1,3-diphosphoglycerate to 3-phosphoglycerate. Both L- and D- forms of purine and pyrimidine nucleotides can be used as substrates, but the activity is much lower on pyrimidines. Negatively regulates the biosynthesis of acetyl-CoA from pyruvate in the mitochondrion. The polypeptide is Phosphoglycerate kinase (PGK1) (Eremothecium gossypii (strain ATCC 10895 / CBS 109.51 / FGSC 9923 / NRRL Y-1056) (Yeast)).